The sequence spans 422 residues: Proline-rich protein 22 (422 aa).

Disordered regions lie at residues 1–35 (MQHP…PAPT), 306–325 (LCEV…SADD), and 363–422 (EEQP…ATPH). Basic residues predominate over residues 383–400 (GKRKASTAKKGKPGRKAR). Residues 413–422 (PREDLGATPH) are compositionally biased toward basic and acidic residues.

The polypeptide is Proline-rich protein 22 (PRR22) (Homo sapiens (Human)).